We begin with the raw amino-acid sequence, 104 residues long: uncharacterized protein (104 aa).

It to M.jannaschii MJ1511.

This is an uncharacterized protein from Methanocaldococcus jannaschii (strain ATCC 43067 / DSM 2661 / JAL-1 / JCM 10045 / NBRC 100440) (Methanococcus jannaschii).